The sequence spans 439 residues: C4-dicarboxylate transport protein 1 (439 aa).

The next 6 membrane-spanning stretches (helical) occupy residues 18–38 (VLYI…WLWP), 56–76 (LIKM…IAHV), 91–111 (IYFE…ANVI), 157–177 (GEIL…MSLG), 193–213 (AIFG…FGAM), and 231–251 (LIAT…GIIA).

Belongs to the dicarboxylate/amino acid:cation symporter (DAACS) (TC 2.A.23) family.

Its subcellular location is the cell inner membrane. Its function is as follows. Responsible for the transport of dicarboxylates such as succinate, fumarate, and malate from the periplasm across the membrane. This chain is C4-dicarboxylate transport protein 1, found in Bradyrhizobium sp. (strain ORS 278).